Here is a 1212-residue protein sequence, read N- to C-terminus: DNA-directed RNA polymerase subunit beta' (1212 aa).

4 residues coordinate Zn(2+): C60, C62, C75, and C78. The Mg(2+) site is built by D450, D452, and D454. Residues C819, C893, C900, and C903 each coordinate Zn(2+).

The protein belongs to the RNA polymerase beta' chain family. As to quaternary structure, the RNAP catalytic core consists of 2 alpha, 1 beta, 1 beta' and 1 omega subunit. When a sigma factor is associated with the core the holoenzyme is formed, which can initiate transcription. Mg(2+) is required as a cofactor. Zn(2+) serves as cofactor.

The catalysed reaction is RNA(n) + a ribonucleoside 5'-triphosphate = RNA(n+1) + diphosphate. Its function is as follows. DNA-dependent RNA polymerase catalyzes the transcription of DNA into RNA using the four ribonucleoside triphosphates as substrates. The protein is DNA-directed RNA polymerase subunit beta' of Streptococcus uberis (strain ATCC BAA-854 / 0140J).